Reading from the N-terminus, the 514-residue chain is Ras-GEF domain-containing family member 1B-A (514 aa).

Positions 76–206 (HDNNLISGSL…MTQTLIRKLT (131 aa)) constitute an N-terminal Ras-GEF domain. In terms of domain architecture, Ras-GEF spans 246–494 (DPFTLAQQLT…YLASYESEGP (249 aa)).

Detected in oocytes, and in embryos at 4 to 120 hours post-fertilization (hpf). Detected along marginal blastomeres at early epiboly stage and throughout the margin at the onset of gastrulation. At 60% epiboly, strongest expression is found in the dorsal shield region and is restricted to the epiblast. Detected in the anterior border of the presomitic mesoderm at the end of epiboly. Detected in adaxial cells, in the somites and in the nervous system during somitogenesis. Detected in diencephalon and hindbrain and in cells surrounding the notochord, including adaxial cells and ventral mesendoderm, in 15-somite stage embryos. At 48 hpf, detected mainly in the brain.

Its function is as follows. Guanine nucleotide exchange factor (GEF) for Ras family proteins (in vitro). The polypeptide is Ras-GEF domain-containing family member 1B-A (rasgef1ba) (Danio rerio (Zebrafish)).